The chain runs to 902 residues: Potassium/sodium hyperpolarization-activated cyclic nucleotide-gated channel 1 (902 aa).

Residues 1–75 (MEGGGKPNSA…PAGSFEDAEG (75 aa)) are disordered. Topologically, residues 1–131 (MEGGGKPNSA…WIIHPYSDFR (131 aa)) are cytoplasmic. A helical transmembrane segment spans residues 132–153 (FYWDLIMLIMMVGNLVIIPVGI). Over 154–162 (TFFTEQTTT) the chain is Extracellular. The chain crosses the membrane as a helical span at residues 163-183 (PWIIFNVASDTVFLLDLIMNF). Residues 184-204 (RTGTVNEDSSEIILDPKVIKM) are Cytoplasmic-facing. The helical transmembrane segment at 205–225 (NYLKSWFVVDFISSIPVDYIF) threads the bilayer. Topologically, residues 226 to 249 (LIVEKGMDSEVYKTARALRIVRFT) are extracellular. The chain crosses the membrane as a helical; Voltage-sensor span at residues 250–270 (KILSLLRLLRLSRLIRYIHQW). Residues 271 to 284 (EEIFHMTYDLASAV) lie on the Cytoplasmic side of the membrane. Residues 285 to 307 (VRIFNLIGMMLLLCHWDGCLQFL) traverse the membrane as a helical segment. Residues 308–333 (VPLLQDFPPDCWVSLNEMVNDSWGKQ) are Extracellular-facing. The N-linked (GlcNAc...) asparagine glycan is linked to Asn327. An intramembrane region (pore-forming) is located at residues 334–355 (YSYALFKAMSHMLCIGYGAQAP). A Selectivity filter motif is present at residues 347-351 (CIGYG). The Extracellular segment spans residues 356-360 (VSMSD). Residues 361 to 381 (LWITMLSMIVGATCYAMFVGH) form a helical membrane-spanning segment. The Cytoplasmic portion of the chain corresponds to 382 to 902 (ATALIQSLDS…AEKPRFASNL (521 aa)). Gly528, Glu529, Cys531, Arg538, Thr539, Arg579, and Arg582 together coordinate 3',5'-cyclic AMP. 3 disordered regions span residues 634–681 (TALN…QPSA), 713–824 (ASQL…VGES), and 858–902 (MSSG…ASNL). Composition is skewed to low complexity over residues 639–680 (TSST…PQPS), 720–736 (QQPQ…QTQP), and 744–769 (QPQQ…QQPQ). Positions 770–793 (TPGSSTPKNEVHKSTQALHNTNLT) are enriched in polar residues. Positions 867–877 (RGVPPAPPPPA) are enriched in pro residues. Basic and acidic residues predominate over residues 889–902 (KDPDAEKPRFASNL).

It belongs to the potassium channel HCN family. As to quaternary structure, homotetramer. Heterotetramer with HCN2. The potassium channel is composed of a homo- or heterotetrameric complex of pore-forming subunits. Interacts with KCNE2. Interacts with the SH3 domain of CSK. Highly expressed in cerebral cortex, cerebellum, throughout the hippocampus, in medial habenula, anterior dorsal nucleus in the thalamus, tenia tecta, several nuclei of the general motor system and in optic nerve layer. Detected in a subset of elongated cells in taste buds.

It is found in the cell membrane. The enzyme catalyses Na(+)(in) = Na(+)(out). It carries out the reaction K(+)(in) = K(+)(out). Its activity is regulated as follows. Activated by cAMP, and at 10-100 times higher concentrations, also by cGMP. cAMP binding promotes tetramerization and formation of an active channel. Compared to other family members, cAMP has less stimulatory effect on HCN1 because part of the molecules already contain bound cAMP and form homotetramers when cAMP levels are low, this inherent tetramerization in HCN1 results in a weaker response to increased cAMP. Hyperpolarization-activated ion channel that are permeable to sodium and potassium ions. Exhibits weak selectivity for potassium over sodium ions. Contributes to the native pacemaker currents in heart (If) and in neurons (Ih). Participates in cerebellar mechanisms of motor learning. May mediate responses to sour stimuli. The protein is Potassium/sodium hyperpolarization-activated cyclic nucleotide-gated channel 1 (Hcn1) of Rattus norvegicus (Rat).